The chain runs to 269 residues: 4-hydroxy-tetrahydrodipicolinate reductase (269 aa).

11 to 16 serves as a coordination point for NAD(+); the sequence is GPIGRM. Lys-39 provides a ligand contact to NADP(+). Residues 101 to 103 and 125 to 128 contribute to the NAD(+) site; these read GTT and ASNF. Catalysis depends on His-158, which acts as the Proton donor/acceptor. His-159 lines the (S)-2,3,4,5-tetrahydrodipicolinate pocket. Catalysis depends on Lys-162, which acts as the Proton donor. (S)-2,3,4,5-tetrahydrodipicolinate is bound at residue 168–169; that stretch reads GT.

The protein belongs to the DapB family. As to quaternary structure, homotetramer.

It is found in the cytoplasm. It catalyses the reaction (S)-2,3,4,5-tetrahydrodipicolinate + NAD(+) + H2O = (2S,4S)-4-hydroxy-2,3,4,5-tetrahydrodipicolinate + NADH + H(+). The catalysed reaction is (S)-2,3,4,5-tetrahydrodipicolinate + NADP(+) + H2O = (2S,4S)-4-hydroxy-2,3,4,5-tetrahydrodipicolinate + NADPH + H(+). It participates in amino-acid biosynthesis; L-lysine biosynthesis via DAP pathway; (S)-tetrahydrodipicolinate from L-aspartate: step 4/4. Its function is as follows. Catalyzes the conversion of 4-hydroxy-tetrahydrodipicolinate (HTPA) to tetrahydrodipicolinate. The chain is 4-hydroxy-tetrahydrodipicolinate reductase from Buchnera aphidicola subsp. Acyrthosiphon pisum (strain 5A).